The sequence spans 90 residues: Secretoglobin family 1D member 2 (90 aa).

A signal peptide spans 1-21 (MKLSVCLLLVTLALCCYQANA).

The protein belongs to the secretoglobin family. Lipophilin subfamily. In terms of tissue distribution, highest expression was found in skeletal muscle. Expressed as well in thymus, trachea, kidney, steroid responsive tissues (prostate, testis, uterus, breast and ovary) and salivary gland.

The protein resides in the secreted. Its function is as follows. May bind androgens and other steroids, may also bind estramustine, a chemotherapeutic agent used for prostate cancer. May be under transcriptional regulation of steroid hormones. This chain is Secretoglobin family 1D member 2 (SCGB1D2), found in Homo sapiens (Human).